The following is a 161-amino-acid chain: Nucleotide-binding protein Bphy_0527 (161 aa).

Belongs to the YajQ family.

Its function is as follows. Nucleotide-binding protein. The protein is Nucleotide-binding protein Bphy_0527 of Paraburkholderia phymatum (strain DSM 17167 / CIP 108236 / LMG 21445 / STM815) (Burkholderia phymatum).